Reading from the N-terminus, the 359-residue chain is Molybdenum import ATP-binding protein ModC (359 aa).

In terms of domain architecture, ABC transporter spans Met-1 to Asp-236. ATP is bound at residue Gly-34–Thr-41. Positions Gln-294–Ala-359 constitute a Mop domain.

The protein belongs to the ABC transporter superfamily. Molybdate importer (TC 3.A.1.8) family. As to quaternary structure, the complex is composed of two ATP-binding proteins (ModC), two transmembrane proteins (ModB) and a solute-binding protein (ModA).

It is found in the cell inner membrane. It carries out the reaction molybdate(out) + ATP + H2O = molybdate(in) + ADP + phosphate + H(+). Part of the ABC transporter complex ModABC involved in molybdenum import. Responsible for energy coupling to the transport system. The protein is Molybdenum import ATP-binding protein ModC of Dechloromonas aromatica (strain RCB).